A 343-amino-acid chain; its full sequence is Calcium/calmodulin-dependent protein kinase type 1B (343 aa).

The Protein kinase domain occupies 15-270 (YEIREKLGSG…CQQALQHLWI (256 aa)). Residues 21 to 29 (LGSGAFSEV) and Lys44 each bind ATP. Asp136 serves as the catalytic Proton acceptor. The interval 290 to 311 (KNFARTHWKRAFNATSFLRHIR) is calmodulin-binding. The disordered stretch occupies residues 314–343 (GQSPEGEEASRQGMTRHSHPGLGTSQSPKW). Ser338 bears the Phosphoserine mark.

It belongs to the protein kinase superfamily. CAMK Ser/Thr protein kinase family. CaMK subfamily. In terms of processing, isoform 1 and isoform 2 are phosphorylated by CAMKK1. As to expression, isoform 1 is expressed in liver, heart, lung, kidney, spleen and testis. Isoform 2 is predominantly expressed in cerebrum and cerebellum.

The protein localises to the cytoplasm. It localises to the nucleus. The catalysed reaction is L-seryl-[protein] + ATP = O-phospho-L-seryl-[protein] + ADP + H(+). It carries out the reaction L-threonyl-[protein] + ATP = O-phospho-L-threonyl-[protein] + ADP + H(+). With respect to regulation, activated by Ca(2+)/calmodulin. Must be phosphorylated to be maximally active. Activated by CAMKK1. Functionally, calcium/calmodulin-dependent protein kinase belonging to a proposed calcium-triggered signaling cascade. In vitro, isoform 1 and isoform 2 phosphorylate CREB1, SYN1/synapsin I. Phosphorylates and activates CAMK1. This chain is Calcium/calmodulin-dependent protein kinase type 1B (Pnck), found in Rattus norvegicus (Rat).